The chain runs to 380 residues: Flagellar P-ring protein (380 aa).

Residues 1 to 35 (MRFFTQSPFPLRTLTRRLTAFVCVGLLLLPGFTLA) form the signal peptide.

Belongs to the FlgI family. The basal body constitutes a major portion of the flagellar organelle and consists of four rings (L,P,S, and M) mounted on a central rod.

The protein resides in the periplasm. It localises to the bacterial flagellum basal body. Functionally, assembles around the rod to form the L-ring and probably protects the motor/basal body from shearing forces during rotation. This Gluconobacter oxydans (strain 621H) (Gluconobacter suboxydans) protein is Flagellar P-ring protein.